The chain runs to 489 residues: Threonine/serine exporter (489 aa).

10 helical membrane passes run 151-171 (GFPV…VLLG), 174-194 (WQVS…TSFL), 206-226 (VVGG…ALQF), 233-253 (SQII…VQSL), 268-288 (FFET…GIQL), 314-334 (IIAG…EWSS), 335-355 (VIIA…FVVY), 356-376 (LGPV…GGLL), 381-401 (LIPP…GLAI), and 420-440 (IAVA…GEWI). Residues 464 to 489 (FQEEAEQNQRRQRKRPKTNQRFGNKR) form a disordered region. Basic residues predominate over residues 473–489 (RRQRKRPKTNQRFGNKR).

Belongs to the ThrE exporter (TC 2.A.79) family.

It is found in the cell membrane. The catalysed reaction is L-threonine(in) + H(+)(out) = L-threonine(out) + H(+)(in). Its activity is regulated as follows. Transport is inhibited by the proton ionophore carbonyl cyanide m-chlorophenylhydrazone (CCCP). Functionally, catalyzes the export of L-threonine and L-serine from the cell to the extracellular environment. Export is dependent on the proton motive force. This Corynebacterium glutamicum (Brevibacterium saccharolyticum) protein is Threonine/serine exporter.